The primary structure comprises 351 residues: Phosphoribosylformylglycinamidine cyclo-ligase (351 aa).

The protein belongs to the AIR synthase family.

It is found in the cytoplasm. It catalyses the reaction 2-formamido-N(1)-(5-O-phospho-beta-D-ribosyl)acetamidine + ATP = 5-amino-1-(5-phospho-beta-D-ribosyl)imidazole + ADP + phosphate + H(+). It functions in the pathway purine metabolism; IMP biosynthesis via de novo pathway; 5-amino-1-(5-phospho-D-ribosyl)imidazole from N(2)-formyl-N(1)-(5-phospho-D-ribosyl)glycinamide: step 2/2. The sequence is that of Phosphoribosylformylglycinamidine cyclo-ligase from Burkholderia pseudomallei (strain 1710b).